Consider the following 402-residue polypeptide: Serine/threonine transporter SstT (402 aa).

9 helical membrane-spanning segments follow: residues 19–39, 43–63, 86–106, 138–158, 179–199, 212–232, 287–307, 327–347, and 354–374; these read IGVVIGLFLGILVPKASAIGL, LFVGGLKAIAPLLVFTLVISA, TFAAALIAVVVNYIFPLTLIL, AITEANYMSILFWAVIFGLAM, VVKWIINLAPIGIMGLVFTSI, LLILVLVGTMLFVALVVNPII, IPLGAAINMAGAAITINILTL, VVAAVSACGASGVTGGSLLLI, and FGISNDVAMQVVGVGFIVGVI.

The protein belongs to the dicarboxylate/amino acid:cation symporter (DAACS) (TC 2.A.23) family.

The protein resides in the cell membrane. The catalysed reaction is L-serine(in) + Na(+)(in) = L-serine(out) + Na(+)(out). The enzyme catalyses L-threonine(in) + Na(+)(in) = L-threonine(out) + Na(+)(out). In terms of biological role, involved in the import of serine and threonine into the cell, with the concomitant import of sodium (symport system). This chain is Serine/threonine transporter SstT, found in Streptococcus agalactiae serotype Ia (strain ATCC 27591 / A909 / CDC SS700).